The chain runs to 477 residues: UTP--glucose-1-phosphate uridylyltransferase (477 aa).

The residue at position 2 (alanine 2) is an N-acetylalanine. Residues 92-95 (LNGG), lysine 106, glutamine 169, and glycine 198 each bind UTP. 94 to 95 (GG) contacts substrate. Residues histidine 199 and 227 to 229 (NSD) each bind substrate. 2 residues coordinate UTP: aspartate 229 and lysine 367.

The protein belongs to the UDPGP type 1 family. In terms of assembly, monomer. Mg(2+) serves as cofactor.

The protein localises to the cytoplasm. The enzyme catalyses alpha-D-glucose 1-phosphate + UTP + H(+) = UDP-alpha-D-glucose + diphosphate. With respect to regulation, inhibition by uncomplexed, free UTP. Functionally, plays a central role as a glucosyl donor in cellular metabolic pathways. The polypeptide is UTP--glucose-1-phosphate uridylyltransferase (Solanum tuberosum (Potato)).